The primary structure comprises 228 residues: MTVVVVQFGGSNCDRDAVRALQHIGIDATRVWHEDGLNDSVENLDGIILPGGFSYGDYLRAGAMAAHSPIVNDIQAAAERGIPVLGVCNGAQVGCESGLTPGAFTTNDRARFQCETVHLRVENATTPWTEAYEAGTVIEIPIAHGEGRFEITENEYEMLKNDNQILFRYCDASGNITDDANPNGSRGNVAGITGNYDTVAVLMPHPERATLPELGRSTDGKGILQAFG.

The Glutamine amidotransferase type-1 domain occupies 2–228 (TVVVVQFGGS…DGKGILQAFG (227 aa)). Catalysis depends on cysteine 88, which acts as the Nucleophile. Active-site residues include histidine 205 and glutamate 207.

Part of the FGAM synthase complex composed of 1 PurL, 1 PurQ and 2 PurS subunits.

It is found in the cytoplasm. The catalysed reaction is N(2)-formyl-N(1)-(5-phospho-beta-D-ribosyl)glycinamide + L-glutamine + ATP + H2O = 2-formamido-N(1)-(5-O-phospho-beta-D-ribosyl)acetamidine + L-glutamate + ADP + phosphate + H(+). It carries out the reaction L-glutamine + H2O = L-glutamate + NH4(+). Its pathway is purine metabolism; IMP biosynthesis via de novo pathway; 5-amino-1-(5-phospho-D-ribosyl)imidazole from N(2)-formyl-N(1)-(5-phospho-D-ribosyl)glycinamide: step 1/2. Functionally, part of the phosphoribosylformylglycinamidine synthase complex involved in the purines biosynthetic pathway. Catalyzes the ATP-dependent conversion of formylglycinamide ribonucleotide (FGAR) and glutamine to yield formylglycinamidine ribonucleotide (FGAM) and glutamate. The FGAM synthase complex is composed of three subunits. PurQ produces an ammonia molecule by converting glutamine to glutamate. PurL transfers the ammonia molecule to FGAR to form FGAM in an ATP-dependent manner. PurS interacts with PurQ and PurL and is thought to assist in the transfer of the ammonia molecule from PurQ to PurL. In Haloquadratum walsbyi (strain DSM 16790 / HBSQ001), this protein is Phosphoribosylformylglycinamidine synthase subunit PurQ.